A 1749-amino-acid polypeptide reads, in one-letter code: Kinase non-catalytic C-lobe domain-containing protein 1 (1749 aa).

A KIND 1 domain is found at valine 37–glutamate 217. Disordered stretches follow at residues valine 210 to arginine 275 and cysteine 361 to leucine 435. 2 stretches are compositionally biased toward basic and acidic residues: residues leucine 363–leucine 373 and alanine 410–glutamate 430. Residues valine 444–glutamate 608 enclose the KIND 2 domain. 2 disordered regions span residues alanine 689–aspartate 871 and glutamine 962–serine 1061. Residues glutamate 702 to leucine 717 are compositionally biased toward basic and acidic residues. Low complexity-rich tracts occupy residues glutamine 739–alanine 748 and proline 766–glycine 779. The span at histidine 823 to arginine 833 shows a compositional bias: basic residues. Positions glycine 853–aspartate 871 are enriched in basic and acidic residues. Serine 964 carries the post-translational modification Phosphoserine. Residues serine 980–arginine 990 show a composition bias toward low complexity. Residues arginine 1005–aspartate 1019 show a composition bias toward polar residues. Residues valine 1040–proline 1056 show a composition bias toward basic and acidic residues. The stretch at glutamine 1133 to lysine 1190 forms a coiled coil. An N-terminal Ras-GEF domain is found at lysine 1246–methionine 1371. Positions serine 1468–alanine 1719 constitute a Ras-GEF domain.

Interacts (via KIND2) with MAP2; the interaction enhances MAP2 phosphorylation and localizes KNDC1 to dendrites. Expressed specifically in the cerebral cortex.

It localises to the cell projection. The protein resides in the dendrite. Its subcellular location is the perikaryon. RAS-Guanine nucleotide exchange factor (GEF) that controls the negative regulation of neuronal dendrite growth by mediating a signaling pathway linking RAS and MAP2. May be involved in cellular senescence. The polypeptide is Kinase non-catalytic C-lobe domain-containing protein 1 (Homo sapiens (Human)).